The sequence spans 192 residues: MEYSSLTLDDFLSRFQLLRPQINRETLNHRQAAVLIPIVRRPQPGLLLTQRSIHLRKHAGQVAFPGGAVDDTDTSVIAAALREAEEEVAIPPSSVEVIGVLPPVDSVTGYQVTPVVGIIPPDLPYHASEDEVSAVFEMPLAQALHLGRYHPLDIYRRGDSHRVWLSWYEHYFVWGMTAGIIRELALQIGVKP.

A Nudix hydrolase domain is found at 29–160 (HRQAAVLIPI…PLDIYRRGDS (132 aa)). The Nudix box signature appears at 67–89 (GAVDDTDTSVIAAALREAEEEVA). Mg(2+)-binding residues include Glu83 and Glu87.

Belongs to the Nudix hydrolase family. PCD1 subfamily. The cofactor is Mn(2+). Mg(2+) serves as cofactor.

In terms of biological role, probably mediates the hydrolysis of some nucleoside diphosphate derivatives. This is an uncharacterized protein from Escherichia fergusonii (strain ATCC 35469 / DSM 13698 / CCUG 18766 / IAM 14443 / JCM 21226 / LMG 7866 / NBRC 102419 / NCTC 12128 / CDC 0568-73).